We begin with the raw amino-acid sequence, 360 residues long: Phospho-N-acetylmuramoyl-pentapeptide-transferase (360 aa).

10 consecutive transmembrane segments (helical) span residues 25–45, 73–93, 97–117, 132–152, 168–188, 199–219, 236–256, 263–283, 288–308, and 338–358; these read RGIL…PWMI, TMGG…WADL, YVWV…VDDY, WKYF…YMTA, VSIP…VGSS, GLAI…CYLS, AGEL…FLWF, VFMG…IAVI, VVLF…IIQV, and VIVR…ATLK.

It belongs to the glycosyltransferase 4 family. MraY subfamily. Mg(2+) serves as cofactor.

The protein localises to the cell inner membrane. It catalyses the reaction UDP-N-acetyl-alpha-D-muramoyl-L-alanyl-gamma-D-glutamyl-meso-2,6-diaminopimeloyl-D-alanyl-D-alanine + di-trans,octa-cis-undecaprenyl phosphate = di-trans,octa-cis-undecaprenyl diphospho-N-acetyl-alpha-D-muramoyl-L-alanyl-D-glutamyl-meso-2,6-diaminopimeloyl-D-alanyl-D-alanine + UMP. Its pathway is cell wall biogenesis; peptidoglycan biosynthesis. Functionally, catalyzes the initial step of the lipid cycle reactions in the biosynthesis of the cell wall peptidoglycan: transfers peptidoglycan precursor phospho-MurNAc-pentapeptide from UDP-MurNAc-pentapeptide onto the lipid carrier undecaprenyl phosphate, yielding undecaprenyl-pyrophosphoryl-MurNAc-pentapeptide, known as lipid I. The sequence is that of Phospho-N-acetylmuramoyl-pentapeptide-transferase from Ectopseudomonas mendocina (strain ymp) (Pseudomonas mendocina).